A 254-amino-acid polypeptide reads, in one-letter code: 3-deoxy-manno-octulosonate cytidylyltransferase (254 aa).

The protein belongs to the KdsB family.

It is found in the cytoplasm. The enzyme catalyses 3-deoxy-alpha-D-manno-oct-2-ulosonate + CTP = CMP-3-deoxy-beta-D-manno-octulosonate + diphosphate. It participates in nucleotide-sugar biosynthesis; CMP-3-deoxy-D-manno-octulosonate biosynthesis; CMP-3-deoxy-D-manno-octulosonate from 3-deoxy-D-manno-octulosonate and CTP: step 1/1. Its pathway is bacterial outer membrane biogenesis; lipopolysaccharide biosynthesis. Activates KDO (a required 8-carbon sugar) for incorporation into bacterial lipopolysaccharide in Gram-negative bacteria. The protein is 3-deoxy-manno-octulosonate cytidylyltransferase of Haemophilus influenzae (strain ATCC 51907 / DSM 11121 / KW20 / Rd).